Consider the following 250-residue polypeptide: Phosphonates import ATP-binding protein PhnC (250 aa).

The region spanning 2–247 (ILFNNVNKVW…KLDAQAMKKI (246 aa)) is the ABC transporter domain. 35 to 42 (GLSGAGKT) serves as a coordination point for ATP.

The protein belongs to the ABC transporter superfamily. Phosphonates importer (TC 3.A.1.9.1) family. In terms of assembly, the complex is composed of two ATP-binding proteins (PhnC), two transmembrane proteins (PhnE) and a solute-binding protein (PhnD).

It localises to the cell membrane. It carries out the reaction phosphonate(out) + ATP + H2O = phosphonate(in) + ADP + phosphate + H(+). In terms of biological role, part of the ABC transporter complex PhnCDE involved in phosphonates import. Responsible for energy coupling to the transport system. The protein is Phosphonates import ATP-binding protein PhnC of Mycoplasma capricolum subsp. capricolum (strain California kid / ATCC 27343 / NCTC 10154).